Reading from the N-terminus, the 92-residue chain is Small ribosomal subunit protein uS17 (92 aa).

This sequence belongs to the universal ribosomal protein uS17 family. As to quaternary structure, part of the 30S ribosomal subunit.

In terms of biological role, one of the primary rRNA binding proteins, it binds specifically to the 5'-end of 16S ribosomal RNA. The sequence is that of Small ribosomal subunit protein uS17 from Bordetella petrii (strain ATCC BAA-461 / DSM 12804 / CCUG 43448).